Consider the following 233-residue polypeptide: Large ribosomal subunit protein eL6z (233 aa).

The interval 175 to 195 (EFFEAEKEEKKEIPQEKKEDQ) is disordered.

The protein belongs to the eukaryotic ribosomal protein eL6 family.

The protein is Large ribosomal subunit protein eL6z (RPL6A) of Arabidopsis thaliana (Mouse-ear cress).